A 555-amino-acid chain; its full sequence is DNA-directed primase/polymerase protein (555 aa).

A coiled-coil region spans residues 1-22 (MKRKWEATLKQIEERASHYERK). Residues arginine 76, 114–116 (DLE), and 165–169 (KFSRH) contribute to the substrate site. Residues aspartate 114 and glutamate 116 each contribute to the Mn(2+) site. The interval 210-230 (ETTGHEFTHFSETPSEQGTCF) is disordered. Over residues 219–230 (FSETPSEQGTCF) the composition is skewed to polar residues. The residue at position 255 (serine 255) is a Phosphoserine. Residues 288–291 (RNFR) and lysine 297 contribute to the substrate site. Residues cysteine 418, histidine 425, cysteine 445, and cysteine 450 each coordinate Zn(2+). The Zinc knuckle motif motif lies at 418–451 (CENIGRAHRSNNIMILVDLKNEVWYQKCHDPVCK). Residues 480–503 (TDTTADTETKSPHGPSSSVLSKGA) are disordered. Positions 480 to 555 (TDTTADTETK…DELLIEVLQE (76 aa)) are interaction with RPA1. Short sequence motifs (RPA1-binding motif) lie at residues 509-523 (WDNG…EATE) and 543-551 (EIPDELLIE).

This sequence belongs to the eukaryotic-type primase small subunit family. As to quaternary structure, interacts with RPA1; leading to recruitment to chromatin and stimulate DNA primase activity. Interacts with SSBP1. Interacts with POLDIP2; leading to enhance DNA polymerase activity. Requires Mn(2+) as cofactor.

The protein resides in the nucleus. The protein localises to the mitochondrion matrix. It is found in the chromosome. The enzyme catalyses ssDNA + n NTP = ssDNA/pppN(pN)n-1 hybrid + (n-1) diphosphate.. It carries out the reaction DNA(n) + a 2'-deoxyribonucleoside 5'-triphosphate = DNA(n+1) + diphosphate. Functionally, DNA primase and DNA polymerase required to tolerate replication-stalling lesions by bypassing them. Required to facilitate mitochondrial and nuclear replication fork progression by initiating de novo DNA synthesis using dNTPs and acting as an error-prone DNA polymerase able to bypass certain DNA lesions. Shows a high capacity to tolerate DNA damage lesions such as 8oxoG and abasic sites in DNA. Provides different translesion synthesis alternatives when DNA replication is stalled: able to synthesize DNA primers downstream of lesions, such as ultraviolet (UV) lesions, R-loops and G-quadruplexes, to allow DNA replication to continue. Can also realign primers ahead of 'unreadable lesions' such as abasic sites and 6-4 photoproduct (6-4 pyrimidine-pyrimidinone), thereby skipping the lesion. Repriming avoids fork degradation while leading to accumulation of internal ssDNA gaps behind the forks. Also able to incorporate nucleotides opposite DNA lesions such as 8oxoG, like a regular translesion synthesis DNA polymerase. Also required for reinitiating stalled forks after UV damage during nuclear DNA replication. Required for mitochondrial DNA (mtDNA) synthesis and replication, by reinitiating synthesis after UV damage or in the presence of chain-terminating nucleotides. Prevents APOBEC family-mediated DNA mutagenesis by repriming downstream of abasic site to prohibit error-prone translesion synthesis. Has non-overlapping function with POLH. In addition to its role in DNA damage response, also required to maintain efficient nuclear and mitochondrial DNA replication in unperturbed cells. This chain is DNA-directed primase/polymerase protein, found in Bos taurus (Bovine).